Reading from the N-terminus, the 89-residue chain is Cell division topological specificity factor (89 aa).

The protein belongs to the MinE family.

Prevents the cell division inhibition by proteins MinC and MinD at internal division sites while permitting inhibition at polar sites. This ensures cell division at the proper site by restricting the formation of a division septum at the midpoint of the long axis of the cell. This Klebsiella pneumoniae (strain 342) protein is Cell division topological specificity factor.